A 367-amino-acid chain; its full sequence is uncharacterized protein (367 aa).

It belongs to the Gfo/Idh/MocA family.

This is an uncharacterized protein from Streptococcus pneumoniae serotype 4 (strain ATCC BAA-334 / TIGR4).